The chain runs to 527 residues: Ribonuclease Y (527 aa).

Residues 21 to 41 (ILAIFFSFIIGIVFGGMALFV) traverse the membrane as a helical segment. A disordered region spans residues 78 to 97 (READKTRNSAETELKERRSE). Residues 217 to 302 (TTNVVPLPSD…EVVTKAKEEV (86 aa)) enclose the KH domain. Residues 343–436 (VLQHSIEVAQ…VSAADAISSA (94 aa)) form the HD domain.

It belongs to the RNase Y family.

The protein resides in the cell membrane. Functionally, endoribonuclease that initiates mRNA decay. This Dehalococcoides mccartyi (strain ATCC BAA-2100 / JCM 16839 / KCTC 5957 / BAV1) protein is Ribonuclease Y.